A 416-amino-acid polypeptide reads, in one-letter code: Serine hydroxymethyltransferase (416 aa).

(6S)-5,6,7,8-tetrahydrofolate contacts are provided by residues Leu118 and 122–124; that span reads GHL. The residue at position 227 (Lys227) is an N6-(pyridoxal phosphate)lysine. (6S)-5,6,7,8-tetrahydrofolate is bound by residues Glu242 and 350–352; that span reads SPF.

The protein belongs to the SHMT family. As to quaternary structure, homodimer. Requires pyridoxal 5'-phosphate as cofactor.

It is found in the cytoplasm. The enzyme catalyses (6R)-5,10-methylene-5,6,7,8-tetrahydrofolate + glycine + H2O = (6S)-5,6,7,8-tetrahydrofolate + L-serine. Its pathway is one-carbon metabolism; tetrahydrofolate interconversion. The protein operates within amino-acid biosynthesis; glycine biosynthesis; glycine from L-serine: step 1/1. In terms of biological role, catalyzes the reversible interconversion of serine and glycine with tetrahydrofolate (THF) serving as the one-carbon carrier. This reaction serves as the major source of one-carbon groups required for the biosynthesis of purines, thymidylate, methionine, and other important biomolecules. Also exhibits THF-independent aldolase activity toward beta-hydroxyamino acids, producing glycine and aldehydes, via a retro-aldol mechanism. The polypeptide is Serine hydroxymethyltransferase (Syntrophotalea carbinolica (strain DSM 2380 / NBRC 103641 / GraBd1) (Pelobacter carbinolicus)).